Reading from the N-terminus, the 117-residue chain is Ig heavy chain V region MOPC 47A (117 aa).

One can recognise an Ig-like domain in the interval 1 to 113 (EVKLVESGGG…FAYWGZGTLV (113 aa)).

The polypeptide is Ig heavy chain V region MOPC 47A (Mus musculus (Mouse)).